The following is a 710-amino-acid chain: Cleavage and polyadenylation factor complex subunit C74.02c (710 aa).

A compositionally biased stretch (polar residues) spans 1-30 (MDNWNSVRNVSSDRQTSKTSENPPHTSNEY). 3 disordered regions span residues 1–42 (MDNW…LSPD), 85–170 (ASSN…SDVN), and 361–510 (GPAM…SVSW). Positions 86-108 (SSNPSLISSGSSQTGSPSQSLSS) are enriched in low complexity. The segment covering 109 to 170 (NKEPSSPGIS…EVPSSKSDVN (62 aa)) has biased composition (polar residues). Low complexity-rich tracts occupy residues 361-383 (GPAM…SSNS) and 401-420 (LASS…PLTK). The segment covering 421-430 (QQTNPSTPLS) has biased composition (polar residues). Over residues 437-447 (KGREKEKDKDS) the composition is skewed to basic and acidic residues.

In terms of assembly, component of the cleavage and polyadenylation factor (CPF) complex.

The protein resides in the cytoplasm. Its subcellular location is the nucleus. In terms of biological role, RNA-binding component of the cleavage and polyadenylation factor (CPF) complex, which plays a key role in polyadenylation-dependent pre-mRNA 3'-end formation. Involved in poly(A) site recognition. May be involved in coupling transcription termination and mRNA 3'-end formation. The sequence is that of Cleavage and polyadenylation factor complex subunit C74.02c from Schizosaccharomyces pombe (strain 972 / ATCC 24843) (Fission yeast).